A 132-amino-acid polypeptide reads, in one-letter code: Small ribosomal subunit protein uS8 (132 aa).

Belongs to the universal ribosomal protein uS8 family. Part of the 30S ribosomal subunit. Contacts proteins S5 and S12.

One of the primary rRNA binding proteins, it binds directly to 16S rRNA central domain where it helps coordinate assembly of the platform of the 30S subunit. This chain is Small ribosomal subunit protein uS8, found in Maricaulis maris (strain MCS10) (Caulobacter maris).